Reading from the N-terminus, the 167-residue chain is Peptide deformylase (167 aa).

Fe cation-binding residues include Cys91 and His133. Glu134 is an active-site residue. His137 is a binding site for Fe cation.

Belongs to the polypeptide deformylase family. Fe(2+) is required as a cofactor.

It carries out the reaction N-terminal N-formyl-L-methionyl-[peptide] + H2O = N-terminal L-methionyl-[peptide] + formate. Its function is as follows. Removes the formyl group from the N-terminal Met of newly synthesized proteins. Requires at least a dipeptide for an efficient rate of reaction. N-terminal L-methionine is a prerequisite for activity but the enzyme has broad specificity at other positions. The polypeptide is Peptide deformylase (Tolumonas auensis (strain DSM 9187 / NBRC 110442 / TA 4)).